The primary structure comprises 576 residues: Alpha-bisabolol synthase (576 aa).

Arginine 286, aspartate 323, aspartate 327, arginine 466, and asparagine 469 together coordinate (2E,6E)-farnesyl diphosphate. Positions 323 and 327 each coordinate Mg(2+). The DDXXD motif motif lies at 323-327; it reads DDVYD. 3 residues coordinate Mg(2+): asparagine 469, threonine 473, and glutamate 477.

The protein belongs to the terpene synthase family. Tpsb subfamily. The cofactor is Mg(2+). It depends on Mn(2+) as a cofactor.

Produces a mixture of beta-bisabolene and alpha-bisabolol, along with traces of alpha-bisabolene and farnesene isomers from (2E,6E)-farnesyl diphosphate in fragrance biosynthesis. This chain is Alpha-bisabolol synthase, found in Santalum spicatum (Australian sandalwood).